A 52-amino-acid polypeptide reads, in one-letter code: UPF0181 protein HD_1137 (52 aa).

The protein belongs to the UPF0181 family.

The protein is UPF0181 protein HD_1137 of Haemophilus ducreyi (strain 35000HP / ATCC 700724).